The following is a 557-amino-acid chain: Dihydroxy-acid dehydratase 2 (557 aa).

Residue Cys-50 participates in [2Fe-2S] cluster binding. Asp-82 serves as a coordination point for Mg(2+). Residue Cys-123 coordinates [2Fe-2S] cluster. Mg(2+) contacts are provided by Asp-124 and Lys-125. Residue Lys-125 is modified to N6-carboxylysine. Cys-195 lines the [2Fe-2S] cluster pocket. A Mg(2+)-binding site is contributed by Glu-447. The Proton acceptor role is filled by Ser-473.

This sequence belongs to the IlvD/Edd family. Homodimer. It depends on [2Fe-2S] cluster as a cofactor. Mg(2+) serves as cofactor.

It carries out the reaction (2R)-2,3-dihydroxy-3-methylbutanoate = 3-methyl-2-oxobutanoate + H2O. The enzyme catalyses (2R,3R)-2,3-dihydroxy-3-methylpentanoate = (S)-3-methyl-2-oxopentanoate + H2O. It functions in the pathway amino-acid biosynthesis; L-isoleucine biosynthesis; L-isoleucine from 2-oxobutanoate: step 3/4. It participates in amino-acid biosynthesis; L-valine biosynthesis; L-valine from pyruvate: step 3/4. In terms of biological role, functions in the biosynthesis of branched-chain amino acids. Catalyzes the dehydration of (2R,3R)-2,3-dihydroxy-3-methylpentanoate (2,3-dihydroxy-3-methylvalerate) into 2-oxo-3-methylpentanoate (2-oxo-3-methylvalerate) and of (2R)-2,3-dihydroxy-3-methylbutanoate (2,3-dihydroxyisovalerate) into 2-oxo-3-methylbutanoate (2-oxoisovalerate), the penultimate precursor to L-isoleucine and L-valine, respectively. This chain is Dihydroxy-acid dehydratase 2, found in Burkholderia lata (strain ATCC 17760 / DSM 23089 / LMG 22485 / NCIMB 9086 / R18194 / 383).